Reading from the N-terminus, the 821-residue chain is Frameshifted structural polyprotein (821 aa).

Residues 1 to 106 form a disordered region; that stretch reads MNRGFFNMLG…KPKPGKRQRM (106 aa). Over residues 38-49 the composition is skewed to polar residues; it reads LASQIQQLTTAV. Over residues 67–106 the composition is skewed to basic residues; that stretch reads PPPRQKKQAPKQPPKPKKPKTQEKKKKQPAKPKPGKRQRM. Residues 93-101 form a ribosome-binding region; sequence KQPAKPKPG. Residues 114–264 form the Peptidase S3 domain; it reads RLFDVKNEDG…KTTPEGTEEW (151 aa). Active-site charge relay system residues include His-141, Asp-163, and Ser-215. The functions as an uncleaved signal peptide for the precursor of protein E3/E2 stretch occupies residues 265 to 279; it reads SAAPLVTAMCLLGNV. Asn-278 carries N-linked (GlcNAc...) asparagine; by host glycosylation. A disulfide bridge connects residues Cys-283 and Cys-289. 2 N-linked (GlcNAc...) asparagine; by host glycosylation sites follow: Asn-524 and Asn-646. The helical transmembrane segment at 696-716 threads the bilayer; that stretch reads ILAVASATVAMMIGVTVAVLC. S-palmitoyl cysteine; by host attachment occurs at residues Cys-724, Cys-744, and Cys-745. Helical transmembrane passes span 726 to 746 and 764 to 784; these read TPYALAPNAVIPTSLALLCCV and NSQPFFWVQLCIPLAAFIVLM.

This sequence belongs to the alphavirus frameshifted structural polyprotein family. Homomultimer. Interacts with host karyopherin KPNA4; this interaction allows the nuclear import of the viral capsid protein. Interacts with spike glycoprotein E2. Interacts with host IRAK1; the interaction leads to inhibition of IRAK1-dependent signaling. In terms of assembly, the precursor of protein E3/E2 and E1 form a heterodimer shortly after synthesis. As to quaternary structure, processing of the precursor of protein E3/E2 into E2 and E3 results in a heterodimer of the spike glycoproteins E2 and E1. Spike at virion surface are constituted of three E2-E1 heterodimers. Post-translationally, specific enzymatic cleavages in vivo yield mature proteins. Capsid protein is auto-cleaved during polyprotein translation, unmasking a signal peptide at the N-terminus of the precursor of E3/E2. The remaining polyprotein is then targeted to the host endoplasmic reticulum, where host signal peptidase cleaves it into pE2 and TF. pE2 is further processed to mature E3 and E2 by host furin in trans-Golgi vesicle. Palmitoylated via thioester bonds. These palmitoylations may induce disruption of the C-terminus transmembrane. This would result in the reorientation of E2 C-terminus from lumenal to cytoplasmic side. In terms of processing, palmitoylated via thioester bonds.

It localises to the virion. The protein localises to the host cytoplasm. The protein resides in the host cell membrane. Its subcellular location is the host nucleus. It is found in the virion membrane. The catalysed reaction is Autocatalytic release of the core protein from the N-terminus of the togavirus structural polyprotein by hydrolysis of a -Trp-|-Ser- bond.. Functionally, forms an icosahedral capsid with a T=4 symmetry composed of 240 copies of the capsid protein surrounded by a lipid membrane through which penetrate 80 spikes composed of trimers of E1-E2 heterodimers. The capsid protein binds to the viral RNA genome at a site adjacent to a ribosome binding site for viral genome translation following genome release. Possesses a protease activity that results in its autocatalytic cleavage from the nascent structural protein. Following its self-cleavage, the capsid protein transiently associates with ribosomes, and within several minutes the protein binds to viral RNA and rapidly assembles into icosahedric core particles. The resulting nucleocapsid eventually associates with the cytoplasmic domain of the spike glycoprotein E2 at the cell membrane, leading to budding and formation of mature virions. In case of infection, new virions attach to target cells and after clathrin-mediated endocytosis their membrane fuses with the host endosomal membrane. This leads to the release of the nucleocapsid into the cytoplasm, followed by an uncoating event necessary for the genomic RNA to become accessible. The uncoating might be triggered by the interaction of capsid proteins with ribosomes. Binding of ribosomes would release the genomic RNA since the same region is genomic RNA-binding and ribosome-binding. Specifically inhibits interleukin-1 receptor-associated kinase 1/IRAK1-dependent signaling during viral entry, representing a means by which the alphaviruses may evade innate immune detection and activation prior to viral gene expression. Provides the signal sequence for the translocation of the precursor of protein E3/E2 to the host endoplasmic reticulum. Furin-cleaved E3 remains associated with spike glycoprotein E1 and mediates pH protection of the latter during the transport via the secretory pathway. After virion release from the host cell, the assembly protein E3 is gradually released in the extracellular space. Its function is as follows. Plays an essential role in viral attachment to target host cell, by binding to the cell receptor. Synthesized as a pE2 precursor which is processed by furin at the cell membrane just before virion budding, giving rise to E2-E1 heterodimer. The pE2-E1 heterodimer is stable, whereas E2-E1 is unstable and dissociate at low pH. pE2 is processed at the last step, presumably to avoid E1 fusion activation before its final export to cell surface. E2 C-terminus contains a transitory transmembrane that would be disrupted by palmitoylation, resulting in reorientation of the C-terminal tail from lumenal to cytoplasmic side. This step is critical since E2 C-terminus is involved in budding by interacting with capsid proteins. This release of E2 C-terminus in cytoplasm occurs lately in protein export, and precludes premature assembly of particles at the endoplasmic reticulum membrane. In terms of biological role, plays a role in viral assembly and release. The chain is Frameshifted structural polyprotein from Sindbis virus (SINV).